A 237-amino-acid polypeptide reads, in one-letter code: MIPTPVLRFNPIADKVPKWKRIYHKWRGIQNMPFKSKYFVGYDLDGNSYWEFKNVNNPGRYRRIVEPAKPDLSLVDHKIPPQWVQWLRFTRPHHPTLEELIADKQRQELLQAKIAAYEAKWKEIPLKTAENADESRDMSLEDQLKPTFTEAELAEMAQVFEKVPQQAAPAPPRVPNMAAIEVEDIIKHYPENGPDTVLADGGRQRDHDLKMDYVEKERDDSGKPAEWTPKAAVRRRG.

Basic and acidic residues predominate over residues Val214–Lys223. The interval Val214–Gly237 is disordered.

This sequence belongs to the complex I NDUFA12 subunit family.

Its subcellular location is the mitochondrion. In terms of biological role, acts as an assembly factor of mitochondrial complex I. In Yarrowia lipolytica (strain CLIB 122 / E 150) (Yeast), this protein is NADH-ubiquinone oxidoreductase assembly factor N7BML.